A 478-amino-acid chain; its full sequence is Probable cytosolic Fe-S cluster assembly factor CPIJ010948 (478 aa).

[4Fe-4S] cluster-binding residues include Cys-23, Cys-69, Cys-72, Cys-75, Cys-189, Cys-245, Cys-396, and Cys-400.

The protein belongs to the NARF family.

Functionally, component of the cytosolic iron-sulfur (Fe/S) protein assembly machinery. Required for maturation of extramitochondrial Fe/S proteins. The chain is Probable cytosolic Fe-S cluster assembly factor CPIJ010948 from Culex quinquefasciatus (Southern house mosquito).